Here is a 296-residue protein sequence, read N- to C-terminus: Biliverdin reductase A (296 aa).

Positions 1–2 (MN) are excised as a propeptide. NADP(+) is bound by residues 16–19 (VGRA), 44–46 (SRR), 77–80 (SSSH), and Y98. A Phosphothreonine modification is found at T174. Phosphoserine occurs at positions 178 and 230. Residues K248 and K253 each carry the N6-acetyllysine modification. Residues H280, C281, C292, and C293 each coordinate Zn(2+).

The protein belongs to the Gfo/Idh/MocA family. Biliverdin reductase subfamily. As to quaternary structure, monomer. Requires Zn(2+) as cofactor. Liver.

It is found in the cytoplasm. The protein localises to the cytosol. The enzyme catalyses (4Z,15Z)-bilirubin IXalpha + NAD(+) = biliverdin IXalpha + NADH + H(+). The catalysed reaction is (4Z,15Z)-bilirubin IXalpha + NADP(+) = biliverdin IXalpha + NADPH + H(+). The protein operates within porphyrin-containing compound metabolism; protoheme degradation. Its function is as follows. Reduces the gamma-methene bridge of the open tetrapyrrole, biliverdin IXalpha, to bilirubin with the concomitant oxidation of a NADH or NADPH cofactor. Does not reduce bilirubin IXbeta. Uses the reactants NADH or NADPH depending on the pH; NADH is used at the acidic pH range (6-6.9) and NADPH at the alkaline range (8.5-8.7). NADPH, however, is the probable reactant in biological systems. The sequence is that of Biliverdin reductase A from Homo sapiens (Human).